The following is a 102-amino-acid chain: Monothiol glutaredoxin-S4 (102 aa).

The Glutaredoxin domain occupies 1-101 (MDKLQKMISE…PMLKRVGALW (101 aa)). Cys-21 is a [2Fe-2S] cluster binding site. The short motif at 99–102 (ALWL) is the Responsive for interaction with TGA factors element.

The protein belongs to the glutaredoxin family. CC-type subfamily.

Its subcellular location is the cytoplasm. It is found in the nucleus. In terms of biological role, may only reduce GSH-thiol disulfides, but not protein disulfides. The polypeptide is Monothiol glutaredoxin-S4 (GRXS4) (Arabidopsis thaliana (Mouse-ear cress)).